The chain runs to 1067 residues: UPF0507 protein KLLA0D01133g (1067 aa).

Positions 280–432 (IVEDQELEHR…FHQDTVDSLT (153 aa)) constitute a VPS9 domain.

It belongs to the UPF0507 family.

This chain is UPF0507 protein KLLA0D01133g, found in Kluyveromyces lactis (strain ATCC 8585 / CBS 2359 / DSM 70799 / NBRC 1267 / NRRL Y-1140 / WM37) (Yeast).